The sequence spans 118 residues: NADH-ubiquinone oxidoreductase chain 3 (118 aa).

A run of 3 helical transmembrane segments spans residues 7 to 27 (ICISLVISLLLSLILLVVPFL), 62 to 82 (LVSILFIIFDLEVTFFFPWAV), and 87 to 107 (IDLFGFWSMMAFLLILTIGFL).

The protein belongs to the complex I subunit 3 family.

It localises to the mitochondrion membrane. It carries out the reaction a ubiquinone + NADH + 5 H(+)(in) = a ubiquinol + NAD(+) + 4 H(+)(out). Core subunit of the mitochondrial membrane respiratory chain NADH dehydrogenase (Complex I) that is believed to belong to the minimal assembly required for catalysis. Complex I functions in the transfer of electrons from NADH to the respiratory chain. The immediate electron acceptor for the enzyme is believed to be ubiquinone. The sequence is that of NADH-ubiquinone oxidoreductase chain 3 (ND3) from Oenothera berteroana (Bertero's evening primrose).